We begin with the raw amino-acid sequence, 406 residues long: Tryptophan synthase beta chain (406 aa).

Position 97 is an N6-(pyridoxal phosphate)lysine (Lys-97).

This sequence belongs to the TrpB family. In terms of assembly, tetramer of two alpha and two beta chains. It depends on pyridoxal 5'-phosphate as a cofactor.

The enzyme catalyses (1S,2R)-1-C-(indol-3-yl)glycerol 3-phosphate + L-serine = D-glyceraldehyde 3-phosphate + L-tryptophan + H2O. It participates in amino-acid biosynthesis; L-tryptophan biosynthesis; L-tryptophan from chorismate: step 5/5. The beta subunit is responsible for the synthesis of L-tryptophan from indole and L-serine. This Lacticaseibacillus casei (strain BL23) (Lactobacillus casei) protein is Tryptophan synthase beta chain.